We begin with the raw amino-acid sequence, 283 residues long: MSNVETSARPFELCGFPVGLEHPLFLIAGPCVIETEQLALDTAGALKEITDGLGIPFIYKSSFDKANRSSHASYRGPGMEEGLRILAEVKRQIGVPVLTDVHEDTPLQEVASVVDVLQTPAFLCRQTNFIQNVANTGKPVNLKKGQFLAPWDMKHVAAKALATGNRHIMVCERGVSFGYNNLVSDMRSLSIMRETGCPVVYDATHSVQLPGGQGTASGGQREFVPALARAAVAVGISGLFMETHPDPDRALSDGPNSWPLDRMKALLELLSTLDRTVKASPLL.

It belongs to the KdsA family.

The protein resides in the cytoplasm. The enzyme catalyses D-arabinose 5-phosphate + phosphoenolpyruvate + H2O = 3-deoxy-alpha-D-manno-2-octulosonate-8-phosphate + phosphate. It participates in carbohydrate biosynthesis; 3-deoxy-D-manno-octulosonate biosynthesis; 3-deoxy-D-manno-octulosonate from D-ribulose 5-phosphate: step 2/3. It functions in the pathway bacterial outer membrane biogenesis; lipopolysaccharide biosynthesis. The polypeptide is 2-dehydro-3-deoxyphosphooctonate aldolase (Methylococcus capsulatus (strain ATCC 33009 / NCIMB 11132 / Bath)).